The primary structure comprises 581 residues: Probable CDP-diacylglycerol--glycerol-3-phosphate 3-phosphatidyltransferase (581 aa).

The disordered stretch occupies residues 27 to 65; that stretch reads RSATTTTTTTTKACGNGSSQSPPSTPLLSSKSSTITSNK. Residues 44–65 show a composition bias toward low complexity; sequence SSQSPPSTPLLSSKSSTITSNK. ATP is bound at residue 160–167; it reads ASLYLGTS. 2 PLD phosphodiesterase domains span residues 248-274 and 487-520; these read TIGV…SKDY and DKWT…GSRS. Catalysis depends on residues His-253, Lys-255, and Asp-260.

This sequence belongs to the CDP-alcohol phosphatidyltransferase class-II family.

The enzyme catalyses a CDP-1,2-diacyl-sn-glycerol + sn-glycerol 3-phosphate = a 1,2-diacyl-sn-glycero-3-phospho-(1'-sn-glycero-3'-phosphate) + CMP + H(+). It functions in the pathway phospholipid metabolism; phosphatidylglycerol biosynthesis; phosphatidylglycerol from CDP-diacylglycerol: step 1/2. Its function is as follows. Functions in the biosynthesis of the anionic phospholipids phosphatidylglycerol and cardiolipin. This is Probable CDP-diacylglycerol--glycerol-3-phosphate 3-phosphatidyltransferase (pgs1) from Dictyostelium discoideum (Social amoeba).